The following is a 60-amino-acid chain: UPF0337 protein asr4653 (60 aa).

The protein belongs to the UPF0337 (CsbD) family.

The sequence is that of UPF0337 protein asr4653 from Nostoc sp. (strain PCC 7120 / SAG 25.82 / UTEX 2576).